We begin with the raw amino-acid sequence, 522 residues long: Bifunctional purine biosynthesis protein PurH (522 aa).

The region spanning 1–145 (MKPIARALIS…KNHAAVTVIV (145 aa)) is the MGS-like domain.

This sequence belongs to the PurH family.

The enzyme catalyses (6R)-10-formyltetrahydrofolate + 5-amino-1-(5-phospho-beta-D-ribosyl)imidazole-4-carboxamide = 5-formamido-1-(5-phospho-D-ribosyl)imidazole-4-carboxamide + (6S)-5,6,7,8-tetrahydrofolate. It carries out the reaction IMP + H2O = 5-formamido-1-(5-phospho-D-ribosyl)imidazole-4-carboxamide. The protein operates within purine metabolism; IMP biosynthesis via de novo pathway; 5-formamido-1-(5-phospho-D-ribosyl)imidazole-4-carboxamide from 5-amino-1-(5-phospho-D-ribosyl)imidazole-4-carboxamide (10-formyl THF route): step 1/1. It participates in purine metabolism; IMP biosynthesis via de novo pathway; IMP from 5-formamido-1-(5-phospho-D-ribosyl)imidazole-4-carboxamide: step 1/1. This chain is Bifunctional purine biosynthesis protein PurH, found in Nitrosococcus oceani (strain ATCC 19707 / BCRC 17464 / JCM 30415 / NCIMB 11848 / C-107).